Reading from the N-terminus, the 895-residue chain is DNA mismatch repair protein MutS (895 aa).

Residue Gly607–Ser614 participates in ATP binding.

Belongs to the DNA mismatch repair MutS family.

Its function is as follows. This protein is involved in the repair of mismatches in DNA. It is possible that it carries out the mismatch recognition step. This protein has a weak ATPase activity. This Bacillus cytotoxicus (strain DSM 22905 / CIP 110041 / 391-98 / NVH 391-98) protein is DNA mismatch repair protein MutS.